The primary structure comprises 83 residues: Cell division topological specificity factor (83 aa).

This sequence belongs to the MinE family.

Its function is as follows. Prevents the cell division inhibition by proteins MinC and MinD at internal division sites while permitting inhibition at polar sites. This ensures cell division at the proper site by restricting the formation of a division septum at the midpoint of the long axis of the cell. In Deinococcus deserti (strain DSM 17065 / CIP 109153 / LMG 22923 / VCD115), this protein is Cell division topological specificity factor.